The primary structure comprises 230 residues: Enolase-phosphatase E1 (230 aa).

It belongs to the HAD-like hydrolase superfamily. MasA/MtnC family. As to quaternary structure, monomer. Mg(2+) is required as a cofactor.

It catalyses the reaction 5-methylsulfanyl-2,3-dioxopentyl phosphate + H2O = 1,2-dihydroxy-5-(methylsulfanyl)pent-1-en-3-one + phosphate. It participates in amino-acid biosynthesis; L-methionine biosynthesis via salvage pathway; L-methionine from S-methyl-5-thio-alpha-D-ribose 1-phosphate: step 3/6. It functions in the pathway amino-acid biosynthesis; L-methionine biosynthesis via salvage pathway; L-methionine from S-methyl-5-thio-alpha-D-ribose 1-phosphate: step 4/6. Its function is as follows. Bifunctional enzyme that catalyzes the enolization of 2,3-diketo-5-methylthiopentyl-1-phosphate (DK-MTP-1-P) into the intermediate 2-hydroxy-3-keto-5-methylthiopentenyl-1-phosphate (HK-MTPenyl-1-P), which is then dephosphorylated to form the acireductone 1,2-dihydroxy-3-keto-5-methylthiopentene (DHK-MTPene). The sequence is that of Enolase-phosphatase E1 from Bradyrhizobium sp. (strain BTAi1 / ATCC BAA-1182).